The chain runs to 150 residues: MSNPQVAKVFLGVDYGERRIGLAYAAYPLGISLPIGFIATGKTLEATAKLLVGIIQERRVSTVVLGNPLPMQKGQKSALQEDILKLSSLLQESCPVEVILWDERLSSAQAERMLKGDCGLSRKKRKGKTDSIAATLILTSFLEHSPRLPS.

The protein belongs to the YqgF nuclease family.

It is found in the cytoplasm. Could be a nuclease involved in processing of the 5'-end of pre-16S rRNA. This Chlamydia abortus (strain DSM 27085 / S26/3) (Chlamydophila abortus) protein is Putative pre-16S rRNA nuclease.